We begin with the raw amino-acid sequence, 130 residues long: Large-conductance mechanosensitive channel (130 aa).

Helical transmembrane passes span 11–31 (FALK…AAFG) and 70–90 (GAFI…FIFV).

The protein belongs to the MscL family. Homopentamer.

It localises to the cell membrane. In terms of biological role, channel that opens in response to stretch forces in the membrane lipid bilayer. May participate in the regulation of osmotic pressure changes within the cell. This is Large-conductance mechanosensitive channel from Listeria welshimeri serovar 6b (strain ATCC 35897 / DSM 20650 / CCUG 15529 / CIP 8149 / NCTC 11857 / SLCC 5334 / V8).